A 33-amino-acid chain; its full sequence is Brevinin-2HSb (33 aa).

Cys-27 and Cys-33 are joined by a disulfide.

Expressed by the skin glands.

The protein localises to the secreted. Has antibacterial activity against the Gram-positive bacterium S.aureus ATCC 25923 and the Gram-negative bacterium E.coli ATCC 25726. The polypeptide is Brevinin-2HSb (Odorrana hosii (Hose's rock frog)).